Consider the following 62-residue polypeptide: Coiled-coil domain-containing protein YLR146W-A (62 aa).

Positions 14–49 form a coiled coil; it reads EHARMLQNEIQQLFAQLRDTNSQIRCDLNEFEQIKE.

This chain is Coiled-coil domain-containing protein YLR146W-A, found in Saccharomyces cerevisiae (strain ATCC 204508 / S288c) (Baker's yeast).